Consider the following 70-residue polypeptide: Protein SlyX homolog (70 aa).

It belongs to the SlyX family.

This chain is Protein SlyX homolog, found in Shewanella frigidimarina (strain NCIMB 400).